Reading from the N-terminus, the 434-residue chain is MNTSSRSSEPSKVADDVYVQTRWNNEFKHADYLPESLQKCLDQEKTVLERYSELVEVSKTVANESSQALVKHTTKPGDQLVRRVFQQPHQQISLMERYEKTRSYKPQWHAPWKLSKVINGHTGWVRCVCVDPVDNEWFATGSNDTTIKIWDLAAGKLKITLIGHVMSVRDIAISKRHPYMFSASEDKLVKCWDLERNTAIRDFHGHLSGVHTVDVHPSLDIIATAGRDAVVRLWDIRSRSEIMVLPGHKSPINKVKCLPVDPQIISCSGDATVRLWDIIAGKASKVLTHHSRNIRDLTLHPAEFSFASVSTNDVRSWKLPEGQLLTNFQSQNTGILNTVSINHDNVLLAGGDDGTLCFYDYKTGHKYQSMMTTEVAGSLESERSILCSTFDVTGTRLITGEGDKSIKIWKQVPDATEDTFPGLPWNPTLISQRF.

WD repeat units follow at residues 120–160, 163–202, 205–244, 247–288, 290–329, 331–369, and 380–419; these read GHTG…LKIT, GHVM…AIRD, GHLS…EIMV, GHKS…KVLT, HSRN…TNFQ, QNTG…KYQS, and ESER…TEDT.

This sequence belongs to the WD repeat PRL1/PRL2 family. As to quaternary structure, associated with the spliceosome.

It is found in the cytoplasm. The protein localises to the nucleus. Involved in pre-mRNA splicing and required for cell cycle progression at G2/M. In Kluyveromyces lactis (strain ATCC 8585 / CBS 2359 / DSM 70799 / NBRC 1267 / NRRL Y-1140 / WM37) (Yeast), this protein is Pre-mRNA-splicing factor PRP46 (PRP46).